The primary structure comprises 249 residues: MRQKIVAGNWKMNGQIQQVTELVSQIEELIGFDCAAQVAVMPPSIYIPKVRDCLRTGKIVVGAQNVYPKDYGAYTGELSAPMLKDFDCRYVLVGHSERRQFFHEDENFVAQKFHHVKDHGMIPVLCVGETLSERENGKTEQVIAQQVLAVSAKGKDCFRDCVVAYEPVWAIGTGKTATPEQAQKIHQFIRDLVGEINDSDAKHLTLIYGGSVNENNAKALFSMPDIDGGLVGGASLNAKQFVEIVKCIN.

9 to 11 (NWK) lines the substrate pocket. His95 functions as the Electrophile in the catalytic mechanism. The active-site Proton acceptor is the Glu166. Substrate is bound by residues Gly172, Ser211, and 232-233 (GG).

This sequence belongs to the triosephosphate isomerase family. As to quaternary structure, homodimer.

Its subcellular location is the cytoplasm. It catalyses the reaction D-glyceraldehyde 3-phosphate = dihydroxyacetone phosphate. It participates in carbohydrate biosynthesis; gluconeogenesis. It functions in the pathway carbohydrate degradation; glycolysis; D-glyceraldehyde 3-phosphate from glycerone phosphate: step 1/1. Functionally, involved in the gluconeogenesis. Catalyzes stereospecifically the conversion of dihydroxyacetone phosphate (DHAP) to D-glyceraldehyde-3-phosphate (G3P). In Legionella pneumophila subsp. pneumophila (strain Philadelphia 1 / ATCC 33152 / DSM 7513), this protein is Triosephosphate isomerase.